The sequence spans 329 residues: MEKNIKALWKNFQLKLEKIKHYRKLYEQQIKEYKKKITGLNNETDANEISRIKNEIEILNRLIKIKNTKDNVIKKDFDEKNVFEIRNFNFWYNKNKQVLFDINLDIKRNKITALIGKSGCGKSTFIRCLNKLNDLNENTRWTGDIYFLGKNINSGIINDLTLRTSVGMVFQKLTPFNFSIFENIAYGIRAHGIHNKNAINEIVRQALISAALWDEVKDNLHRNANTLSGGQQQRLCIARAIALQPDVLLMDEPTSALDSIATNSIELLIQQLKEKFTIVIVTHSMAQTIRITDETIFFADGRVIEQGTTKQIFTKPKQKATNSYISGKN.

The ABC transporter domain occupies 83–325; the sequence is FEIRNFNFWY…PKQKATNSYI (243 aa). Residue 116–123 participates in ATP binding; sequence GKSGCGKS.

It belongs to the ABC transporter superfamily. Phosphate importer (TC 3.A.1.7) family. The complex is composed of two ATP-binding proteins (PstB), two transmembrane proteins (PstC and PstA) and a solute-binding protein (PstS).

It localises to the cell membrane. The catalysed reaction is phosphate(out) + ATP + H2O = ADP + 2 phosphate(in) + H(+). Its function is as follows. Part of the ABC transporter complex PstSACB involved in phosphate import. Responsible for energy coupling to the transport system. The chain is Phosphate import ATP-binding protein PstB from Mycoplasma genitalium (strain ATCC 33530 / DSM 19775 / NCTC 10195 / G37) (Mycoplasmoides genitalium).